Reading from the N-terminus, the 603-residue chain is uncharacterized protein (603 aa).

A compositionally biased stretch (acidic residues) spans 496 to 513 (EEEDQEEDDTSDDDDQEK). 2 disordered regions span residues 496-536 (EEED…GSLE) and 549-568 (AVAE…DTAQ). Polar residues predominate over residues 517 to 533 (NPQNNIGSLTRTPSSPG).

This sequence belongs to the herpesviridae US22 family.

This is an uncharacterized protein from Human cytomegalovirus (strain AD169) (HHV-5).